A 172-amino-acid chain; its full sequence is Large ribosomal subunit protein uL10 (172 aa).

Belongs to the universal ribosomal protein uL10 family. As to quaternary structure, part of the ribosomal stalk of the 50S ribosomal subunit. The N-terminus interacts with L11 and the large rRNA to form the base of the stalk. The C-terminus forms an elongated spine to which L12 dimers bind in a sequential fashion forming a multimeric L10(L12)X complex.

Forms part of the ribosomal stalk, playing a central role in the interaction of the ribosome with GTP-bound translation factors. The sequence is that of Large ribosomal subunit protein uL10 from Nitrobacter winogradskyi (strain ATCC 25391 / DSM 10237 / CIP 104748 / NCIMB 11846 / Nb-255).